The primary structure comprises 229 residues: Ribonuclease 3 (229 aa).

Residues 7-132 (LKAFEGRIGH…VIAAVYLDAG (126 aa)) enclose the RNase III domain. Residue glutamate 45 coordinates Mg(2+). Residue aspartate 49 is part of the active site. Residues aspartate 118 and glutamate 121 each contribute to the Mg(2+) site. Residue glutamate 121 is part of the active site. One can recognise a DRBM domain in the interval 157 to 226 (DAKTALQEWA…ARALLARMEA (70 aa)).

Belongs to the ribonuclease III family. As to quaternary structure, homodimer. Requires Mg(2+) as cofactor.

It is found in the cytoplasm. The catalysed reaction is Endonucleolytic cleavage to 5'-phosphomonoester.. Functionally, digests double-stranded RNA. Involved in the processing of primary rRNA transcript to yield the immediate precursors to the large and small rRNAs (23S and 16S). Processes some mRNAs, and tRNAs when they are encoded in the rRNA operon. Processes pre-crRNA and tracrRNA of type II CRISPR loci if present in the organism. This Cereibacter sphaeroides (strain ATCC 17029 / ATH 2.4.9) (Rhodobacter sphaeroides) protein is Ribonuclease 3.